Here is an 87-residue protein sequence, read N- to C-terminus: U-scoloptoxin(23)-Er1a (87 aa).

An N-terminal signal peptide occupies residues 1 to 29; it reads MSLIVVRTHSFLFVLVLLLFASVFHSVDS. Positions 32–54 are disordered; that stretch reads FNPNGRYGRRDSASALSDASENK.

This sequence belongs to the scoloptoxin-23 family. As to expression, expressed by the venom gland.

It is found in the secreted. The polypeptide is U-scoloptoxin(23)-Er1a (Ethmostigmus rubripes (Giant centipede)).